Consider the following 2209-residue polypeptide: Genome polyprotein (2209 aa).

A lipid anchor (N-myristoyl glycine; by host) is attached at Gly2. The Cytoplasmic segment spans residues 2–1520 (GAQVSSQKVG…NINRAMTILQ (1519 aa)). The amphipathic alpha-helix stretch occupies residues 580–600 (GLGQMLESMIDNTVRETVGAA). Catalysis depends on for protease 2A activity residues His901 and Asp919. Zn(2+) contacts are provided by Cys936 and Cys938. Cys990 serves as the catalytic For protease 2A activity. The Zn(2+) site is built by Cys996 and His998. The membrane-binding stretch occupies residues 1128-1200 (GDSWLKKFTE…HQSCPSQEHQ (73 aa)). The interval 1128–1266 (GDSWLKKFTE…SPGTGKSVAT (139 aa)) is oligomerization. Residues 1149 to 1153 (SNKIS) form an RNA-binding region. One can recognise an SF3 helicase domain in the interval 1232–1388 (EHTINNYIQF…NEYSRDGKLN (157 aa)). 1256 to 1263 (GSPGTGKS) provides a ligand contact to ATP. The Zn(2+) site is built by Cys1396, Cys1399, Cys1408, and Cys1413. Residues 1396–1413 (CKNCHQPANFKRCCPLVC) form a C4-type zinc finger. The RNA-binding stretch occupies residues 1440 to 1447 (ERNRRSNI). An oligomerization region spans residues 1451-1456 (MEALFQ). The stretch at 1521 to 1536 (AVTTFAAVAGVVYVMY) is an intramembrane region. Residues 1537-2209 (KLFAGHQGAY…TLYRRWLDSF (673 aa)) are Cytoplasmic-facing. The residue at position 1546 (Tyr1546) is an O-(5'-phospho-RNA)-tyrosine. The region spanning 1566 to 1744 (GPGFDYAVAM…FAAALKRSYF (179 aa)) is the Peptidase C3 domain. Active-site for protease 3C activity residues include His1605, Glu1636, and Cys1712. The region spanning 1975 to 2090 (EKLFAFDYTG…SYPHEVDASL (116 aa)) is the RdRp catalytic domain. 2 residues coordinate Mg(2+): Asp1981 and Asp2076.

The protein belongs to the picornaviruses polyprotein family. In terms of assembly, interacts with capsid protein VP1 and capsid protein VP3 to form heterotrimeric protomers. Interacts with capsid protein VP0, and capsid protein VP3 to form heterotrimeric protomers. Interacts with human PVR. Five protomers subsequently associate to form pentamers which serve as building blocks for the capsid. Interacts with capsid protein VP2, capsid protein VP3 and capsid protein VP4 following cleavage of capsid protein VP0. As to quaternary structure, interacts with capsid protein VP1 and capsid protein VP3 in the mature capsid. In terms of assembly, interacts with capsid protein VP0 and capsid protein VP1 to form heterotrimeric protomers. Five protomers subsequently associate to form pentamers which serve as building blocks for the capsid. Interacts with capsid protein VP4 in the mature capsid. Interacts with protein 2C; this interaction may be important for virion morphogenesis. Interacts with capsid protein VP1 and capsid protein VP3. As to quaternary structure, homodimer. In terms of assembly, homohexamer; forms a hexameric ring structure with 6-fold symmetry characteristic of AAA+ ATPases. Interacts (via N-terminus) with host RTN3 (via reticulon domain); this interaction is important for viral replication. Interacts with capsid protein VP3; this interaction may be important for virion morphogenesis. Interacts with protein 3CD. As to quaternary structure, homodimer. Interacts with host GBF1. Interacts (via GOLD domain) with host ACBD3 (via GOLD domain); this interaction allows the formation of a viral protein 3A/ACBD3 heterotetramer with a 2:2 stoichiometry, which will stimulate the recruitment of host PI4KB in order to synthesize PI4P at the viral RNA replication sites. In terms of assembly, interacts with RNA-directed RNA polymerase. Interacts with protein 3AB and with RNA-directed RNA polymerase. As to quaternary structure, interacts with Viral protein genome-linked and with protein 3CD. The cofactor is Mg(2+). Post-translationally, specific enzymatic cleavages in vivo by the viral proteases yield processing intermediates and the mature proteins. Myristoylation is required for the formation of pentamers during virus assembly. Further assembly of 12 pentamers and a molecule of genomic RNA generates the provirion. In terms of processing, during virion maturation, immature virions are rendered infectious following cleavage of VP0 into VP4 and VP2. This maturation seems to be an autocatalytic event triggered by the presence of RNA in the capsid and it is followed by a conformational change infectious virion. Post-translationally, myristoylation is required during RNA encapsidation and formation of the mature virus particle. VPg is uridylylated by the polymerase into VPg-pUpU. This acts as a nucleotide-peptide primer for the genomic RNA replication.

It localises to the virion. Its subcellular location is the host cytoplasm. The protein resides in the host cytoplasmic vesicle membrane. It is found in the host nucleus. The enzyme catalyses a ribonucleoside 5'-triphosphate + H2O = a ribonucleoside 5'-diphosphate + phosphate + H(+). It carries out the reaction Selective cleavage of Tyr-|-Gly bond in the picornavirus polyprotein.. It catalyses the reaction RNA(n) + a ribonucleoside 5'-triphosphate = RNA(n+1) + diphosphate. The catalysed reaction is Selective cleavage of Gln-|-Gly bond in the poliovirus polyprotein. In other picornavirus reactions Glu may be substituted for Gln, and Ser or Thr for Gly.. Replication or transcription is subject to high level of random mutations by the nucleotide analog ribavirin. Forms an icosahedral capsid of pseudo T=3 symmetry with capsid proteins VP2 and VP3. The capsid is 300 Angstroms in diameter, composed of 60 copies of each capsid protein and enclosing the viral positive strand RNA genome. Capsid protein VP1 mainly forms the vertices of the capsid. Capsid protein VP1 interacts with host cell receptor PVR to provide virion attachment to target host cells. This attachment induces virion internalization predominantly through clathrin- and caveolin-independent endocytosis in Hela cells and through caveolin-mediated endocytosis in brain microvascular endothelial cells. Tyrosine kinases are probably involved in the entry process. Virus binding to PVR induces increased junctional permeability and rearrangement of junctional proteins. Modulation of endothelial tight junctions, as well as cytolytic infection of endothelial cells themselves, may result in loss of endothelial integrity which may help the virus to reach the CNS. After binding to its receptor, the capsid undergoes conformational changes. Capsid protein VP1 N-terminus (that contains an amphipathic alpha-helix) and capsid protein VP4 are externalized. Together, they shape a pore in the host membrane through which viral genome is translocated to host cell cytoplasm. In terms of biological role, forms an icosahedral capsid of pseudo T=3 symmetry with capsid proteins VP2 and VP3. The capsid is 300 Angstroms in diameter, composed of 60 copies of each capsid protein and enclosing the viral positive strand RNA genome. Functionally, lies on the inner surface of the capsid shell. After binding to the host receptor, the capsid undergoes conformational changes. Capsid protein VP4 is released, Capsid protein VP1 N-terminus is externalized, and together, they shape a pore in the host membrane through which the viral genome is translocated into the host cell cytoplasm. Its function is as follows. Component of immature procapsids, which is cleaved into capsid proteins VP4 and VP2 after maturation. Allows the capsid to remain inactive before the maturation step. Cysteine protease that cleaves viral polyprotein and specific host proteins. It is responsible for the autocatalytic cleavage between the P1 and P2 regions, which is the first cleavage occurring in the polyprotein. Also cleaves the host translation initiation factor EIF4G1, in order to shut down the capped cellular mRNA translation. Inhibits the host nucleus-cytoplasm protein and RNA trafficking by cleaving host members of the nuclear pores including NUP98, NUP62 and NUP153. Counteracts stress granule formation probably by antagonizing its assembly or promoting its dissassembly. Cleaves and inhibits host IFIH1/MDA5, thereby inhibiting the type-I IFN production and the establishment of the antiviral state. Cleaves and inhibits host MAVS, thereby inhibiting the type-I IFN production and the establishment of the antiviral state. In terms of biological role, plays an essential role in the virus replication cycle by acting as a viroporin. Creates a pore in the host endoplasmic reticulum and as a consequence releases Ca2+ in the cytoplasm of infected cell. In turn, high levels of cytoplasmic calcium may trigger membrane trafficking and transport of viral ER-associated proteins to viroplasms, sites of viral genome replication. Functionally, induces and associates with structural rearrangements of intracellular membranes. Displays RNA-binding, nucleotide binding and NTPase activities. May play a role in virion morphogenesis and viral RNA encapsidation by interacting with the capsid protein VP3. Its function is as follows. Localizes the viral replication complex to the surface of membranous vesicles. Together with protein 3CD binds the Cis-Active RNA Element (CRE) which is involved in RNA synthesis initiation. Acts as a cofactor to stimulate the activity of 3D polymerase, maybe through a nucleid acid chaperone activity. Localizes the viral replication complex to the surface of membranous vesicles. It inhibits host cell endoplasmic reticulum-to-Golgi apparatus transport and causes the disassembly of the Golgi complex, possibly through GBF1 interaction. This would result in depletion of MHC, trail receptors and IFN receptors at the host cell surface. Plays an essential role in viral RNA replication by recruiting ACBD3 and PI4KB at the viral replication sites, thereby allowing the formation of the rearranged membranous structures where viral replication takes place. In terms of biological role, acts as a primer for viral RNA replication and remains covalently bound to viral genomic RNA. VPg is uridylylated prior to priming replication into VPg-pUpU. The oriI viral genomic sequence may act as a template for this. The VPg-pUpU is then used as primer on the genomic RNA poly(A) by the RNA-dependent RNA polymerase to replicate the viral genome. During genome replication, the VPg-RNA linkage is removed by the host TDP2, thereby accelerating replication. During the late stage of the replication cycle, host TDP2 is excluded from sites of viral RNA synthesis and encapsidation, allowing for the generation of progeny virions. Functionally, involved in the viral replication complex and viral polypeptide maturation. It exhibits protease activity with a specificity and catalytic efficiency that is different from protease 3C. Protein 3CD lacks polymerase activity. Protein 3CD binds to the 5'UTR of the viral genome. Its function is as follows. Major viral protease that mediates proteolytic processing of the polyprotein. Cleaves host EIF5B, contributing to host translation shutoff. Also cleaves host PABPC1, contributing to host translation shutoff. Cleaves host RIGI and thus contributes to the inhibition of type I interferon production. Cleaves host NLRP1, triggers host N-glycine-mediated degradation of the autoinhibitory NLRP1 N-terminal fragment. Inhibits the integrated stress response (ISR) in the infected cell by cleaving host G3BP1. Stress granule formation is thus inhibited, which allows protein synthesis and viral replication. Replicates the viral genomic RNA on the surface of intracellular membranes. May form linear arrays of subunits that propagate along a strong head-to-tail interaction called interface-I. Covalently attaches UMP to a tyrosine of VPg, which is used to prime RNA synthesis. The positive stranded RNA genome is first replicated at virus induced membranous vesicles, creating a dsRNA genomic replication form. This dsRNA is then used as template to synthesize positive stranded RNA genomes. ss(+)RNA genomes are either translated, replicated or encapsidated. The protein is Genome polyprotein of Homo sapiens (Human).